A 351-amino-acid polypeptide reads, in one-letter code: N6-Methyl-AMP deaminase (351 aa).

2 residues coordinate Zn(2+): His-23 and His-25. Residues His-25, Asn-27, His-73, 105 to 108, Asp-147, and Gly-180 contribute to the N(6)-methyl-AMP site; that span reads STPR. His-207 contacts Zn(2+). Residues Glu-210, Asp-292, and Asp-293 each contribute to the N(6)-methyl-AMP site. Glu-210 functions as the Proton donor in the catalytic mechanism. Residue Asp-292 participates in Zn(2+) binding.

The protein belongs to the metallo-dependent hydrolases superfamily. Adenosine and AMP deaminases family. In terms of assembly, monomer. Zn(2+) serves as cofactor.

The enzyme catalyses N(6)-methyl-AMP + H2O + H(+) = IMP + methylamine. Catalyzes the hydrolysis of the free cytosolic methylated adenosine nucleotide N(6)-methyl-AMP (N6-mAMP) to produce inositol monophosphate (IMP) and methylamine. Is required for the catabolism of cytosolic N6-mAMP, which is derived from the degradation of mRNA containing N6-methylated adenine (m6A). This Bos taurus (Bovine) protein is N6-Methyl-AMP deaminase.